A 502-amino-acid polypeptide reads, in one-letter code: 4,4'-diapophytoene desaturase (4,4'-diaponeurosporene-forming) (502 aa).

5–17 (VIGAGVTGLAAAA) provides a ligand contact to FAD.

This sequence belongs to the carotenoid/retinoid oxidoreductase family. CrtN subfamily.

It carries out the reaction 15-cis-4,4'-diapophytoene + 3 FAD + 3 H(+) = all-trans-4,4'-diaponeurosporene + 3 FADH2. It participates in carotenoid biosynthesis; staphyloxanthin biosynthesis; staphyloxanthin from farnesyl diphosphate: step 2/5. In terms of biological role, involved in the biosynthesis of the yellow-orange carotenoid staphyloxanthin, which plays a role in the virulence via its protective function against oxidative stress. Catalyzes three successive dehydrogenation reactions that lead to the introduction of three double bonds into 4,4'-diapophytoene (dehydrosqualene), with 4,4'-diapophytofluene and 4,4'-diapo-zeta-carotene as intermediates, and 4,4'-diaponeurosporene (the major deep-yellow pigment in staphylococci strains) as the end product. The chain is 4,4'-diapophytoene desaturase (4,4'-diaponeurosporene-forming) from Staphylococcus aureus (strain USA300).